We begin with the raw amino-acid sequence, 25 residues long: Large ribosomal subunit protein uL29 (25 aa).

Belongs to the universal ribosomal protein uL29 family.

The sequence is that of Large ribosomal subunit protein uL29 (rpmC) from Brevundimonas vesicularis (Pseudomonas vesicularis).